A 475-amino-acid chain; its full sequence is Zinc finger protein 383 (475 aa).

Residues 6-77 (VMFSDVSIDF…GRELTRGLCS (72 aa)) enclose the KRAB domain. 11 C2H2-type zinc fingers span residues 170–192 (FECK…QRIH), 198–220 (YECK…LKIH), 226–248 (FECK…QRIH), 254–276 (YECK…QRIH), 282–304 (YACK…VRIH), 310–332 (YECK…QRIH), 338–360 (YECK…QRIH), 366–388 (YDCK…QRIH), 394–416 (FECL…QRIH), 422–444 (YECN…LRIH), and 450–472 (YNCK…QGIH).

Belongs to the krueppel C2H2-type zinc-finger protein family.

Its subcellular location is the nucleus. It is found in the cytoplasm. Functionally, may function as a transcriptional repressor, suppressing transcriptional activities mediated by MAPK signaling pathways. The chain is Zinc finger protein 383 (ZNF383) from Macaca fascicularis (Crab-eating macaque).